We begin with the raw amino-acid sequence, 356 residues long: tRNA N6-adenosine threonylcarbamoyltransferase (356 aa).

2 residues coordinate Fe cation: His-114 and His-118. Substrate is bound by residues 136–140 (LVSGG), Asp-169, Gly-182, and Asn-280. A Fe cation-binding site is contributed by Asp-308. The interval 333–356 (ARPRWPLDNSQPALLGSGKKGAKA) is disordered.

This sequence belongs to the KAE1 / TsaD family. Fe(2+) serves as cofactor.

Its subcellular location is the cytoplasm. The enzyme catalyses L-threonylcarbamoyladenylate + adenosine(37) in tRNA = N(6)-L-threonylcarbamoyladenosine(37) in tRNA + AMP + H(+). Required for the formation of a threonylcarbamoyl group on adenosine at position 37 (t(6)A37) in tRNAs that read codons beginning with adenine. Is involved in the transfer of the threonylcarbamoyl moiety of threonylcarbamoyl-AMP (TC-AMP) to the N6 group of A37, together with TsaE and TsaB. TsaD likely plays a direct catalytic role in this reaction. In Dinoroseobacter shibae (strain DSM 16493 / NCIMB 14021 / DFL 12), this protein is tRNA N6-adenosine threonylcarbamoyltransferase.